The sequence spans 505 residues: ADP-ribosylarginine hydrolase CG2909 (505 aa).

ADP-D-ribose-binding residues include Arg198, Gly336, Gly338, Gly340, Val341, Trp342, Trp377, Asp432, Asn439, Glu440, Gly450, and Asp451.

It carries out the reaction N(omega)-(ADP-D-ribosyl)-L-arginyl-[protein] + H2O = ADP-D-ribose + L-arginyl-[protein]. The enzyme catalyses N(omega)-(ADP-D-ribosyl)-L-arginine + H2O = ADP-D-ribose + L-arginine. Its function is as follows. Protein ADP-ribosyl hydrolase that specifically removes mono-ADP-ribosyl modifications from protein arginine residues. This Drosophila melanogaster (Fruit fly) protein is ADP-ribosylarginine hydrolase CG2909.